Consider the following 190-residue polypeptide: Elongation factor P-like protein (190 aa).

It belongs to the elongation factor P family.

The polypeptide is Elongation factor P-like protein (Serratia proteamaculans (strain 568)).